Reading from the N-terminus, the 1136-residue chain is Receptor-type guanylate cyclase gcy-4 (1136 aa).

The first 21 residues, 1–21 (MRQLNYYIFISTILTYNLTHG), serve as a signal peptide directing secretion. Over 22–485 (QGPRPVIRVG…CPLPIFEQYR (464 aa)) the chain is Extracellular. Residues Asn-40, Asn-194, Asn-252, Asn-351, Asn-377, Asn-386, and Asn-438 are each glycosylated (N-linked (GlcNAc...) asparagine). Residues 486–506 (ALVIVAIAVTILILLAIIICM) traverse the membrane as a helical segment. The Cytoplasmic portion of the chain corresponds to 507–1136 (SSKIRNRRVE…LRREMMRVEV (630 aa)). The region spanning 533 to 833 (LPMHRRASKS…EDNLMDHVFS (301 aa)) is the Protein kinase domain. The tract at residues 536–565 (HRRASKSSQESETESASETENFTSKSGDTM) is disordered. The Guanylate cyclase domain maps to 891–1021 (TVFFSDLVKF…DTVNTASRME (131 aa)).

It belongs to the adenylyl cyclase class-4/guanylyl cyclase family. Expression is biased toward ASE right (ASER) sensory neuron.

It is found in the cell membrane. It carries out the reaction GTP = 3',5'-cyclic GMP + diphosphate. Guanylate cyclase involved in the production of the second messenger cGMP. Regulates chemotaxis responses toward Br(1-) and I(1-) salt ions in ASE right (ASER) sensory neuron. The chain is Receptor-type guanylate cyclase gcy-4 from Caenorhabditis elegans.